We begin with the raw amino-acid sequence, 627 residues long: uncharacterized protein (627 aa).

Over 1–32 the chain is Extracellular; that stretch reads MVDDSNYLTPHETALAVVATAMKKARLQLDTL. The chain crosses the membrane as a helical span at residues 33–53; sequence LINSILGGVLFSSGSFLLVAV. Over 54–66 the chain is Cytoplasmic; sequence YSEDPDIVARNPG. A helical transmembrane segment spans residues 67 to 87; the sequence is IVNLITGVNFAMGLFYVVMMG. Residues 88 to 113 lie on the Extracellular side of the membrane; the sequence is ADLFNSNILFFSVGVLRKAVTIYDLM. Residues 114 to 134 form a helical membrane-spanning segment; that stretch reads ISWVVSWLGNIAGSLFVSYLF. Residues 135-165 lie on the Cytoplasmic side of the membrane; it reads GHLSGISSQKLWIIGSRQIIEQKVSYSFVQT. Residues 166 to 186 form a helical membrane-spanning segment; that stretch reads FLKGIACNFFVCLAIYLQLMA. Residues 187–192 lie on the Extracellular side of the membrane; it reads KPIHVK. Residues 193–213 form a helical membrane-spanning segment; it reads FILMSFPIIDFIGIGFTHVVG. Over 214–218 the chain is Cytoplasmic; sequence DMSAS. The helical transmembrane segment at 219–239 threads the bilayer; the sequence is FIAMLNGANVSVGKYIWKLLI. The Extracellular segment spans residues 240-245; the sequence is PASLGN. Residues 246 to 266 traverse the membrane as a helical segment; the sequence is IVGGLFFSAVVPFYLHLVVVE. Topologically, residues 267-627 are cytoplasmic; it reads RDRKRLSLPE…FYNRHTSPQL (361 aa). The residue at position 305 (Thr305) is a Phosphothreonine. The tract at residues 512–537 is disordered; it reads PPILPRTTQDTFPHNAPASSPAYTDD. Positions 517–533 are enriched in polar residues; that stretch reads RTTQDTFPHNAPASSPA. Residue Ser546 is modified to Phosphoserine. Thr588 is modified (phosphothreonine). A compositionally biased stretch (basic and acidic residues) spans 605–614; that stretch reads STTRRQKITE. The segment at 605-627 is disordered; the sequence is STTRRQKITEPKNFYNRHTSPQL.

Belongs to the FNT transporter (TC 1.A.16) family.

The protein resides in the membrane. This is an uncharacterized protein from Saccharomyces cerevisiae (strain ATCC 204508 / S288c) (Baker's yeast).